Consider the following 65-residue polypeptide: Probable movement protein p8 (65 aa).

A compositionally biased stretch (polar residues) spans 1–10 (MENTENVRSG). A disordered region spans residues 1–47 (MENTENVRSGRNQREYSKERQQEGGYKEVSKAAVRKEGDVKQDMGPS). Residues 12–42 (NQREYSKERQQEGGYKEVSKAAVRKEGDVKQ) show a composition bias toward basic and acidic residues.

It belongs to the carmovirus/necrovirus/panicovirus movement protein p8 family.

Cell-to-cell movement. The polypeptide is Probable movement protein p8 (Tobacco necrosis virus (strain D) (TNV-D)).